The chain runs to 751 residues: Translation initiation factor IF-2, chloroplastic (751 aa).

The segment at 86-156 (KKEKSKFRKD…KSKKQTSAKN (71 aa)) is disordered. Positions 93–106 (RKDEDYDSLKREDN) are enriched in basic and acidic residues. A compositionally biased stretch (low complexity) spans 129–143 (VSNTNTLNKKNVVKS). The tr-type G domain occupies 250 to 423 (KRPPVIAIMG…ILVSEIEDLK (174 aa)). The tract at residues 259–266 (GHVDHGKT) is G1. GTP is bound at residue 259 to 266 (GHVDHGKT). The tract at residues 284-288 (GITQK) is G2. The G3 stretch occupies residues 309-312 (DTPG). Residues 309–313 (DTPGH) and 363–366 (NKID) each bind GTP. Positions 363–366 (NKID) are G4. The interval 399–401 (SAM) is G5.

It belongs to the TRAFAC class translation factor GTPase superfamily. Classic translation factor GTPase family. IF-2 subfamily.

The protein resides in the plastid. It is found in the chloroplast. Its function is as follows. One of the essential components for the initiation of protein synthesis. Protects formylmethionyl-tRNA from spontaneous hydrolysis and promotes its binding to the 30S ribosomal subunits. Also involved in the hydrolysis of GTP during the formation of the 70S ribosomal complex. The protein is Translation initiation factor IF-2, chloroplastic (infB) of Rhodomonas salina (Cryptomonas salina).